The chain runs to 298 residues: MAASTMSVCSSAYSDSWQVDDCPESCCEPPCSAPSCCAPAPSLSLVCTPVSCVSSPCCQAACEPSACQSGCTSSCTPSCCQQSSCQPACCTSSPCQQACCVPVCCKTVCCKPVCCVPVCCGAASSCCRQSSCQPACCASSSCQPACCVPVCCKPVCCVSTCSEDSSSCCQQSSCQPACCTSSSYQQACCVPVCCKTVYCKPICCVPVCSRASSSRCQQPSCQPACCTTSCCRPSSSVSLLCHPVCRSTCCVPVSSCCAPTSSCQSSCCRPASCVSLLCRPASSRLACYSLCSGKKSSC.

Repeat copies occupy residues 26–30, 36–40, 57–61, 79–83, 89–93, 99–103, 104–108, 109–113, 114–118, 119–123, 126–130, 136–140, 146–150, 151–155, 156–160, 168–172, 178–182, 188–192, 193–197, 203–207, 225–229, 230–234, 249–253, 256–260, and 267–271. Positions 26 to 271 are 25 X 5 AA repeats of C-C-X(3); it reads CCEPPCSAPS…SCQSSCCRPA (246 aa).

Belongs to the KRTAP type 10 family. As to quaternary structure, interacts with hair keratins. As to expression, restricted to a narrow region of the hair fiber cuticle, lying approximately 20 cell layers above the apex of the dermal papilla of the hair root; not detected in any other tissues.

In terms of biological role, in the hair cortex, hair keratin intermediate filaments are embedded in an interfilamentous matrix, consisting of hair keratin-associated proteins (KRTAP), which are essential for the formation of a rigid and resistant hair shaft through their extensive disulfide bond cross-linking with abundant cysteine residues of hair keratins. The matrix proteins include the high-sulfur and high-glycine-tyrosine keratins. The protein is Keratin-associated protein 10-11 (KRTAP10-11) of Homo sapiens (Human).